The following is a 77-amino-acid chain: Conotoxin ArMSGL-0141 (77 aa).

An N-terminal signal peptide occupies residues methionine 1–alanine 18. Positions threonine 19–threonine 44 are excised as a propeptide. Cystine bridges form between cysteine 51–cysteine 63, cysteine 55–cysteine 71, and cysteine 62–cysteine 75. Phenylalanine 76 is modified (phenylalanine amide).

The protein belongs to the conotoxin O3 superfamily. As to expression, expressed by the venom duct.

The protein resides in the secreted. This is Conotoxin ArMSGL-0141 from Conus arenatus (Sand-dusted cone).